A 226-amino-acid chain; its full sequence is MKIIPVIDLKDKIAVHGKSGNRDEYKPLESVICKSSNPIEVAKAYKERGAKTIYIADLNFIMGNGDNFDIIKEIDFINKIVDIGVKSREDLETIKKVLNKDDRAIVATETLKDIELLKEKDIVVSLDFKNGNLLNYSLDEILSCVRDDTPLIILDISSVGTQRGVNAELIKYVLDKTNNPVYVGGGIKGMEDLELCYNLGVDAVLIATAIHKGVLDLEEIINKFGD.

This sequence belongs to the HisA/HisF family.

This is an uncharacterized protein from Methanocaldococcus jannaschii (strain ATCC 43067 / DSM 2661 / JAL-1 / JCM 10045 / NBRC 100440) (Methanococcus jannaschii).